The sequence spans 229 residues: Prolactin (229 aa).

The signal sequence occupies residues 1 to 30; sequence MDSKGSAQKGSRLLLLLVVSNLLLCQGVVS. A disulfide bridge links Cys34 with Cys41. Ser56, Ser64, and Ser120 each carry phosphoserine. Disulfide bonds link Cys88-Cys204 and Cys221-Cys229.

It belongs to the somatotropin/prolactin family. As to quaternary structure, interacts with PRLR.

The protein resides in the secreted. Its function is as follows. Prolactin acts primarily on the mammary gland by promoting lactation. This Capra hircus (Goat) protein is Prolactin (PRL).